Reading from the N-terminus, the 241-residue chain is uncharacterized protein (241 aa).

Disordered stretches follow at residues 19-59, 101-139, and 152-182; these read ERDR…QQLG, VRRP…ASRS, and RGCR…KPCS. A compositionally biased stretch (gly residues) spans 34–48; it reads ARGGRGLWTVGGGGS. A compositionally biased stretch (polar residues) spans 49–58; sequence PTETAESQQL. Positions 106-118 are enriched in pro residues; the sequence is PSVPSPLPKPPVP.

This is an uncharacterized protein from Homo sapiens (Human).